Consider the following 166-residue polypeptide: Protein FAM89A (166 aa).

This sequence belongs to the FAM89 family.

The sequence is that of Protein FAM89A (fam89a) from Xenopus laevis (African clawed frog).